The chain runs to 400 residues: Acetate kinase (400 aa).

N7 serves as a coordination point for Mg(2+). K14 contacts ATP. R85 is a substrate binding site. D142 functions as the Proton donor/acceptor in the catalytic mechanism. ATP contacts are provided by residues H202 to G206, D278 to R280, and G326 to N330. E380 contributes to the Mg(2+) binding site.

The protein belongs to the acetokinase family. As to quaternary structure, homodimer. Mg(2+) is required as a cofactor. The cofactor is Mn(2+).

It is found in the cytoplasm. It catalyses the reaction acetate + ATP = acetyl phosphate + ADP. It participates in metabolic intermediate biosynthesis; acetyl-CoA biosynthesis; acetyl-CoA from acetate: step 1/2. Catalyzes the formation of acetyl phosphate from acetate and ATP. Can also catalyze the reverse reaction. This chain is Acetate kinase, found in Deinococcus deserti (strain DSM 17065 / CIP 109153 / LMG 22923 / VCD115).